The following is a 740-amino-acid chain: 1,4-alpha-glucan branching enzyme GlgB (740 aa).

D419 (nucleophile) is an active-site residue. Residue E472 is the Proton donor of the active site.

The protein belongs to the glycosyl hydrolase 13 family. GlgB subfamily. Monomer.

It catalyses the reaction Transfers a segment of a (1-&gt;4)-alpha-D-glucan chain to a primary hydroxy group in a similar glucan chain.. Its pathway is glycan biosynthesis; glycogen biosynthesis. Functionally, catalyzes the formation of the alpha-1,6-glucosidic linkages in glycogen by scission of a 1,4-alpha-linked oligosaccharide from growing alpha-1,4-glucan chains and the subsequent attachment of the oligosaccharide to the alpha-1,6 position. This is 1,4-alpha-glucan branching enzyme GlgB from Paramagnetospirillum magneticum (strain ATCC 700264 / AMB-1) (Magnetospirillum magneticum).